Here is a 333-residue protein sequence, read N- to C-terminus: Protein-methionine-sulfoxide reductase catalytic subunit MsrP (333 aa).

The tat-type signal signal peptide spans M1–A43. Residues N87, Y90 to E91, C145, T180, N232, R237, and N248 to K250 contribute to the Mo-molybdopterin site.

This sequence belongs to the MsrP family. As to quaternary structure, heterodimer of a catalytic subunit (MsrP) and a heme-binding subunit (MsrQ). The cofactor is Mo-molybdopterin. In terms of processing, predicted to be exported by the Tat system. The position of the signal peptide cleavage has not been experimentally proven.

The protein resides in the periplasm. It carries out the reaction L-methionyl-[protein] + a quinone + H2O = L-methionyl-(S)-S-oxide-[protein] + a quinol. The enzyme catalyses L-methionyl-[protein] + a quinone + H2O = L-methionyl-(R)-S-oxide-[protein] + a quinol. Functionally, part of the MsrPQ system that repairs oxidized periplasmic proteins containing methionine sulfoxide residues (Met-O), using respiratory chain electrons. Thus protects these proteins from oxidative-stress damage caused by reactive species of oxygen and chlorine generated by the host defense mechanisms. MsrPQ is essential for the maintenance of envelope integrity under bleach stress, rescuing a wide series of structurally unrelated periplasmic proteins from methionine oxidation. The catalytic subunit MsrP is non-stereospecific, being able to reduce both (R-) and (S-) diastereoisomers of methionine sulfoxide. The chain is Protein-methionine-sulfoxide reductase catalytic subunit MsrP from Pectobacterium carotovorum subsp. carotovorum (strain PC1).